A 207-amino-acid chain; its full sequence is High frequency lysogenization protein HflD homolog (207 aa).

The protein belongs to the HflD family.

It localises to the cytoplasm. Its subcellular location is the cell inner membrane. The chain is High frequency lysogenization protein HflD homolog from Pseudomonas fluorescens (strain SBW25).